Here is a 493-residue protein sequence, read N- to C-terminus: Glycosyltransferase alg8 (493 aa).

4 consecutive transmembrane segments (helical) span residues 13 to 32 (GWLF…PTSI), 47 to 69 (VGIW…LYIV), 380 to 402 (LTVA…LLWI), and 422 to 444 (PAYP…YVFF).

Belongs to the glycosyltransferase 2 family.

It localises to the cell membrane. Its pathway is glycan biosynthesis; alginate biosynthesis. Functionally, possibly a processive enzyme that polymerizes GDP-mannuronic acid. In Pseudomonas syringae pv. tomato (strain ATCC BAA-871 / DC3000), this protein is Glycosyltransferase alg8 (alg8).